A 347-amino-acid chain; its full sequence is Twinfilin-2 (347 aa).

ADF-H domains are found at residues 3–137 (LVLV…RHIT) and 175–311 (GLAF…DEVH). Residues 314–347 (QHAHKQAFAKPRGPAGKRGNKRLIKGGGENGGNS) form a disordered region. Gly residues predominate over residues 338–347 (KGGGENGGNS).

This sequence belongs to the actin-binding proteins ADF family. Twinfilin subfamily. In terms of assembly, interacts with G-actin; ADP-actin form and capping protein (CP).

It is found in the cytoplasm. It localises to the cytoskeleton. Its subcellular location is the perinuclear region. In terms of biological role, actin-binding protein involved in motile and morphological processes. Inhibits actin polymerization, likely by sequestering G-actin. This is Twinfilin-2 (twf2) from Danio rerio (Zebrafish).